Here is an 877-residue protein sequence, read N- to C-terminus: Polycomb protein Scm (877 aa).

A disordered region spans residues Met1–Pro57. The span at Ser7 to Thr50 shows a compositional bias: low complexity. Residues Arg54–Ala93 form an FCS-type zinc finger. Zn(2+) contacts are provided by Cys63, Cys66, Cys87, and Cys91. MBT repeat units lie at residues Phe175 to Pro273 and Ser281 to Pro382. Disordered regions lie at residues Asn535–Val621, Thr652–Ala692, and Ala713–Pro735. Thr546 carries the phosphothreonine modification. Ser549 and Ser550 each carry phosphoserine. Residues Gln560–Ser569 show a composition bias toward polar residues. The residue at position 585 (Ser585) is a Phosphoserine. Over residues Ala598 to Lys620 the composition is skewed to low complexity. A compositionally biased stretch (low complexity) spans Ser724–Pro735. Residues Trp806 to Ala876 form the SAM domain.

This sequence belongs to the SCM family. In terms of assembly, scm associates with the PRC1 core complex containing PSC, PC, PH and Sce/RING1. Forms homotypic and heterotypic interactions. Interacts with the SAM domain of ph-p via its SAM domain in vitro. Interacts with corto in vitro.

The protein localises to the nucleus. Polycomb group (PcG) protein. PcG proteins act by forming multiprotein complexes, which are required to maintain the transcriptionally repressive state of homeotic genes throughout development. PcG proteins are not required to initiate repression, but to maintain it during later stages of development. They probably act via the methylation of histones, rendering chromatin heritably changed in its expressibility. The chain is Polycomb protein Scm from Drosophila melanogaster (Fruit fly).